An 82-amino-acid polypeptide reads, in one-letter code: Small ribosomal subunit protein bS16 (82 aa).

This sequence belongs to the bacterial ribosomal protein bS16 family.

The chain is Small ribosomal subunit protein bS16 from Desulfosudis oleivorans (strain DSM 6200 / JCM 39069 / Hxd3) (Desulfococcus oleovorans).